We begin with the raw amino-acid sequence, 119 residues long: Ribonuclease P protein component (119 aa).

The protein belongs to the RnpA family. Consists of a catalytic RNA component (M1 or rnpB) and a protein subunit.

It carries out the reaction Endonucleolytic cleavage of RNA, removing 5'-extranucleotides from tRNA precursor.. RNaseP catalyzes the removal of the 5'-leader sequence from pre-tRNA to produce the mature 5'-terminus. It can also cleave other RNA substrates such as 4.5S RNA. The protein component plays an auxiliary but essential role in vivo by binding to the 5'-leader sequence and broadening the substrate specificity of the ribozyme. The sequence is that of Ribonuclease P protein component from Histophilus somni (strain 129Pt) (Haemophilus somnus).